Consider the following 545-residue polypeptide: Thermosome subunit (545 aa).

It belongs to the TCP-1 chaperonin family. Forms an oligomeric complex of eight-membered rings.

Molecular chaperone; binds unfolded polypeptides in vitro, and has a weak ATPase activity. The chain is Thermosome subunit (ths) from Methanopyrus kandleri (strain AV19 / DSM 6324 / JCM 9639 / NBRC 100938).